A 341-amino-acid chain; its full sequence is Tyrosine recombinase XerC (341 aa).

The Core-binding (CB) domain occupies 14–105 (PDAAEALERW…GVRSFFRWAD (92 aa)). Positions 126–309 (PLPRPLAADD…DAEHLLSVYE (184 aa)) constitute a Tyr recombinase domain. Catalysis depends on residues R169, K193, H261, R264, and H287. The O-(3'-phospho-DNA)-tyrosine intermediate role is filled by Y296.

This sequence belongs to the 'phage' integrase family. XerC subfamily. Forms a cyclic heterotetrameric complex composed of two molecules of XerC and two molecules of XerD.

Its subcellular location is the cytoplasm. In terms of biological role, site-specific tyrosine recombinase, which acts by catalyzing the cutting and rejoining of the recombining DNA molecules. The XerC-XerD complex is essential to convert dimers of the bacterial chromosome into monomers to permit their segregation at cell division. It also contributes to the segregational stability of plasmids. This Rhodospirillum centenum (strain ATCC 51521 / SW) protein is Tyrosine recombinase XerC.